Reading from the N-terminus, the 276-residue chain is 3-methyl-2-oxobutanoate hydroxymethyltransferase (276 aa).

The Mg(2+) site is built by aspartate 49 and aspartate 88. Residues 49-50 (DS), aspartate 88, and lysine 118 each bind 3-methyl-2-oxobutanoate. Position 120 (glutamate 120) interacts with Mg(2+). Glutamate 187 acts as the Proton acceptor in catalysis.

This sequence belongs to the PanB family. Homodecamer; pentamer of dimers. Mg(2+) is required as a cofactor.

The protein resides in the cytoplasm. The enzyme catalyses 3-methyl-2-oxobutanoate + (6R)-5,10-methylene-5,6,7,8-tetrahydrofolate + H2O = 2-dehydropantoate + (6S)-5,6,7,8-tetrahydrofolate. Its pathway is cofactor biosynthesis; (R)-pantothenate biosynthesis; (R)-pantoate from 3-methyl-2-oxobutanoate: step 1/2. Its function is as follows. Catalyzes the reversible reaction in which hydroxymethyl group from 5,10-methylenetetrahydrofolate is transferred onto alpha-ketoisovalerate to form ketopantoate. This Afipia carboxidovorans (strain ATCC 49405 / DSM 1227 / KCTC 32145 / OM5) (Oligotropha carboxidovorans) protein is 3-methyl-2-oxobutanoate hydroxymethyltransferase.